Here is a 110-residue protein sequence, read N- to C-terminus: uncharacterized protein (110 aa).

This is an uncharacterized protein from Acidianus convivator (ABV).